The chain runs to 341 residues: Very-long-chain 3-oxoacyl-CoA reductase (341 aa).

Residues 17–37 (ALYGALLLGVYKLTTFALSLV) form a helical membrane-spanning segment. NADP(+) contacts are provided by Val-63, Asp-117, Asn-144, Tyr-218, Lys-222, Val-251, and Ser-253. The Proton donor role is filled by Tyr-218. The Lowers pKa of active site Tyr role is filled by Lys-222.

Belongs to the short-chain dehydrogenases/reductases (SDR) family.

It localises to the endoplasmic reticulum membrane. The enzyme catalyses a very-long-chain (3R)-3-hydroxyacyl-CoA + NADP(+) = a very-long-chain 3-oxoacyl-CoA + NADPH + H(+). It participates in lipid metabolism; fatty acid biosynthesis. Functionally, component of the microsomal membrane bound fatty acid elongation system, which produces the 26-carbon very long-chain fatty acids (VLCFA) from palmitate. Catalyzes the reduction of the 3-ketoacyl-CoA intermediate that is formed in each cycle of fatty acid elongation. VLCFAs serve as precursors for ceramide and sphingolipids. This is Very-long-chain 3-oxoacyl-CoA reductase from Meyerozyma guilliermondii (strain ATCC 6260 / CBS 566 / DSM 6381 / JCM 1539 / NBRC 10279 / NRRL Y-324) (Yeast).